The primary structure comprises 656 residues: ATP-dependent zinc metalloprotease FtsH (656 aa).

At 1–45 (MAIFARRIGLNQHSAYGSRQRVIVMKNFGKKALIKQQSPKRVAWT) the chain is on the cytoplasmic side. The chain crosses the membrane as a helical span at residues 46–66 (GALAASLIMLPTMFGGNPVLA). Over 67-147 (QKAERESLSY…EISSANSRAA (81 aa)) the chain is Lumenal. A helical membrane pass occupies residues 148 to 168 (VGLLINLMWILPLVALMLLFL). Over 169 to 656 (RRSTNASSQA…DEQLSMVNSQ (488 aa)) the chain is Cytoplasmic. 239–246 (GPPGTGKT) provides a ligand contact to ATP. Zn(2+) is bound at residue His460. Glu461 is a catalytic residue. The Zn(2+) site is built by His464 and Asp538.

This sequence in the central section; belongs to the AAA ATPase family. It in the C-terminal section; belongs to the peptidase M41 family. As to quaternary structure, homohexamer. The cofactor is Zn(2+).

It is found in the cellular thylakoid membrane. In terms of biological role, acts as a processive, ATP-dependent zinc metallopeptidase for both cytoplasmic and membrane proteins. Plays a role in the quality control of integral membrane proteins. In Nostoc sp. (strain PCC 7120 / SAG 25.82 / UTEX 2576), this protein is ATP-dependent zinc metalloprotease FtsH.